We begin with the raw amino-acid sequence, 160 residues long: Allophycocyanin alpha chain (160 aa).

Asparagine 70 carries the N4-methylasparagine modification. Cysteine 80 lines the (2R,3E)-phycocyanobilin pocket.

It belongs to the phycobiliprotein family. In terms of assembly, component of the phycobilisome. Heterodimer of an alpha and a beta chain. Post-translationally, contains one covalently linked phycocyanobilin chromophore.

The protein localises to the cellular thylakoid membrane. Its function is as follows. Light-harvesting photosynthetic bile pigment-protein from the phycobiliprotein complex. Allophycocyanin has a maximum absorption at approximately 650 nanometers. The polypeptide is Allophycocyanin alpha chain (apcA) (Mastigocladus laminosus (Fischerella sp.)).